Here is an 896-residue protein sequence, read N- to C-terminus: Microsomal triglyceride transfer protein large subunit (896 aa).

The signal sequence occupies residues 1 to 21; the sequence is MILLAVLFLCFFSSYSASVKG. Residues 28–659 enclose the Vitellogenin domain; that stretch reads LNNERLYKLT…IFQYIGKAEL (632 aa). A disulfide bridge connects residues cysteine 174 and cysteine 194.

In terms of assembly, heterodimer; heterodimerizes with the protein disulfide isomerase (P4HB/PDI). Interacts with APOB. Interacts with PRAP1.

It localises to the endoplasmic reticulum. The protein localises to the golgi apparatus. The enzyme catalyses a 1,2-diacyl-sn-glycero-3-phosphocholine(in) = a 1,2-diacyl-sn-glycero-3-phosphocholine(out). It carries out the reaction a 1,2-diacyl-sn-glycero-3-phosphoethanolamine(in) = a 1,2-diacyl-sn-glycero-3-phosphoethanolamine(out). It catalyses the reaction a cholesterol ester(in) = a cholesterol ester(out). The catalysed reaction is a triacyl-sn-glycerol(in) = a triacyl-sn-glycerol(out). In terms of biological role, catalyzes the transport of triglyceride, cholesteryl ester, and phospholipid between phospholipid surfaces. Required for the assembly and secretion of plasma lipoproteins that contain apolipoprotein B. May be involved in regulating cholesteryl ester biosynthesis in cells that produce lipoproteins. The sequence is that of Microsomal triglyceride transfer protein large subunit (Mttp) from Rattus norvegicus (Rat).